We begin with the raw amino-acid sequence, 420 residues long: L-cysteine:1D-myo-inositol 2-amino-2-deoxy-alpha-D-glucopyranoside ligase (420 aa).

Residue Cys-48 coordinates Zn(2+). L-cysteinyl-5'-AMP contacts are provided by residues 48-51 (CGIT), Thr-63, and 86-88 (NIT). Residues 50 to 60 (ITPYDSTHLGH) carry the 'HIGH' region motif. Residues 192-197 (ERGGDP) carry the 'ERGGDP' region motif. Trp-232 is a binding site for L-cysteinyl-5'-AMP. Cys-236 is a binding site for Zn(2+). 254–256 (GSD) provides a ligand contact to L-cysteinyl-5'-AMP. Residue His-261 coordinates Zn(2+). Ile-288 is a binding site for L-cysteinyl-5'-AMP. A 'KMSKS' region motif is present at residues 294-298 (KMSKS).

This sequence belongs to the class-I aminoacyl-tRNA synthetase family. MshC subfamily. In terms of assembly, monomer. Zn(2+) is required as a cofactor.

It carries out the reaction 1D-myo-inositol 2-amino-2-deoxy-alpha-D-glucopyranoside + L-cysteine + ATP = 1D-myo-inositol 2-(L-cysteinylamino)-2-deoxy-alpha-D-glucopyranoside + AMP + diphosphate + H(+). In terms of biological role, catalyzes the ATP-dependent condensation of GlcN-Ins and L-cysteine to form L-Cys-GlcN-Ins. This is L-cysteine:1D-myo-inositol 2-amino-2-deoxy-alpha-D-glucopyranoside ligase from Corynebacterium glutamicum (strain R).